We begin with the raw amino-acid sequence, 388 residues long: S-adenosylmethionine synthase (388 aa).

Residue H16 participates in ATP binding. D18 contributes to the Mg(2+) binding site. E44 is a binding site for K(+). L-methionine is bound by residues E57 and Q100. Residues 100 to 110 (QSADIAQGVNE) are flexible loop. ATP is bound by residues 167-169 (DAK), 233-234 (RF), D242, 248-249 (RK), A265, and K269. Residue D242 coordinates L-methionine. K273 is an L-methionine binding site.

This sequence belongs to the AdoMet synthase family. Homotetramer; dimer of dimers. It depends on Mg(2+) as a cofactor. The cofactor is K(+).

It localises to the cytoplasm. The enzyme catalyses L-methionine + ATP + H2O = S-adenosyl-L-methionine + phosphate + diphosphate. It functions in the pathway amino-acid biosynthesis; S-adenosyl-L-methionine biosynthesis; S-adenosyl-L-methionine from L-methionine: step 1/1. Catalyzes the formation of S-adenosylmethionine (AdoMet) from methionine and ATP. The overall synthetic reaction is composed of two sequential steps, AdoMet formation and the subsequent tripolyphosphate hydrolysis which occurs prior to release of AdoMet from the enzyme. The polypeptide is S-adenosylmethionine synthase (Aromatoleum aromaticum (strain DSM 19018 / LMG 30748 / EbN1) (Azoarcus sp. (strain EbN1))).